The following is a 72-amino-acid chain: DNA-directed RNA polymerase subunit epsilon (72 aa).

This sequence belongs to the RNA polymerase subunit epsilon family. As to quaternary structure, RNAP is composed of a core of 2 alpha, a beta and a beta' subunit. The core is associated with a delta subunit, and at least one of epsilon or omega. When a sigma factor is associated with the core the holoenzyme is formed, which can initiate transcription.

The catalysed reaction is RNA(n) + a ribonucleoside 5'-triphosphate = RNA(n+1) + diphosphate. Functionally, a non-essential component of RNA polymerase (RNAP). This is DNA-directed RNA polymerase subunit epsilon from Levilactobacillus brevis (strain ATCC 367 / BCRC 12310 / CIP 105137 / JCM 1170 / LMG 11437 / NCIMB 947 / NCTC 947) (Lactobacillus brevis).